Reading from the N-terminus, the 215-residue chain is ATP phosphoribosyltransferase (215 aa).

This sequence belongs to the ATP phosphoribosyltransferase family. Short subfamily. Heteromultimer composed of HisG and HisZ subunits.

The protein localises to the cytoplasm. It catalyses the reaction 1-(5-phospho-beta-D-ribosyl)-ATP + diphosphate = 5-phospho-alpha-D-ribose 1-diphosphate + ATP. It participates in amino-acid biosynthesis; L-histidine biosynthesis; L-histidine from 5-phospho-alpha-D-ribose 1-diphosphate: step 1/9. Catalyzes the condensation of ATP and 5-phosphoribose 1-diphosphate to form N'-(5'-phosphoribosyl)-ATP (PR-ATP). Has a crucial role in the pathway because the rate of histidine biosynthesis seems to be controlled primarily by regulation of HisG enzymatic activity. In Prochlorococcus marinus (strain MIT 9215), this protein is ATP phosphoribosyltransferase.